The chain runs to 379 residues: Anhydro-N-acetylmuramic acid kinase (379 aa).

Residue 9–16 (GTSADGVD) participates in ATP binding.

Belongs to the anhydro-N-acetylmuramic acid kinase family.

The catalysed reaction is 1,6-anhydro-N-acetyl-beta-muramate + ATP + H2O = N-acetyl-D-muramate 6-phosphate + ADP + H(+). Its pathway is amino-sugar metabolism; 1,6-anhydro-N-acetylmuramate degradation. It functions in the pathway cell wall biogenesis; peptidoglycan recycling. Its function is as follows. Catalyzes the specific phosphorylation of 1,6-anhydro-N-acetylmuramic acid (anhMurNAc) with the simultaneous cleavage of the 1,6-anhydro ring, generating MurNAc-6-P. Is required for the utilization of anhMurNAc either imported from the medium or derived from its own cell wall murein, and thus plays a role in cell wall recycling. The polypeptide is Anhydro-N-acetylmuramic acid kinase (Prochlorococcus marinus (strain MIT 9303)).